Reading from the N-terminus, the 484-residue chain is Poly(A) RNA polymerase GLD2 (484 aa).

Ser62 and Ser69 each carry phosphoserine. Residues 76-92 (KRISDEKAFPLDGKRQR) carry the Nuclear localization signal motif. A Phosphoserine modification is found at Ser95. Positions 213 and 215 each coordinate Mg(2+). In terms of domain architecture, PAP-associated spans 386–440 (SLGDLLLGFLKYYATEFDWNTQMISVREAKAIPRPDDMEWRNKYICVEEPFDGTN).

Belongs to the DNA polymerase type-B-like family. GLD2 subfamily. In terms of assembly, interacts with CPEB1, CPEB2, CPSF1 and PABPC1. Interacts with QKI isoform QKI7; promoting recruitment to miRNA miR-122 and miR-122 stabilization. It depends on Mg(2+) as a cofactor. Mn(2+) is required as a cofactor. As to expression, ubiquitous. In brain, it is highly expressed in the cerebral cortex, cerebellum, hippocampus and olfactory bulb.

The protein resides in the cytoplasm. It is found in the nucleus. The enzyme catalyses RNA(n) + ATP = RNA(n)-3'-adenine ribonucleotide + diphosphate. Functionally, cytoplasmic poly(A) RNA polymerase that adds successive AMP monomers to the 3'-end of specific RNAs, forming a poly(A) tail. In contrast to the canonical nuclear poly(A) RNA polymerase, it only adds poly(A) to selected cytoplasmic mRNAs. Does not play a role in replication-dependent histone mRNA degradation. Adds a single nucleotide to the 3' end of specific miRNAs, monoadenylation stabilizes and prolongs the activity of some but not all miRNAs. The polypeptide is Poly(A) RNA polymerase GLD2 (Tent2) (Mus musculus (Mouse)).